We begin with the raw amino-acid sequence, 245 residues long: Uridylate kinase (245 aa).

ATP is bound at residue 13–16; sequence KLSG. Position 56 (Gly56) interacts with UMP. Residues Gly57 and Arg61 each coordinate ATP. UMP contacts are provided by residues Asp76 and 138–145; that span reads TGRPFFTT. ATP is bound by residues Asn166, Tyr172, and Asp175.

Belongs to the UMP kinase family. Homohexamer.

The protein resides in the cytoplasm. The enzyme catalyses UMP + ATP = UDP + ADP. It functions in the pathway pyrimidine metabolism; CTP biosynthesis via de novo pathway; UDP from UMP (UMPK route): step 1/1. Its activity is regulated as follows. Inhibited by UTP. In terms of biological role, catalyzes the reversible phosphorylation of UMP to UDP. The polypeptide is Uridylate kinase (Mycoplasma mobile (strain ATCC 43663 / 163K / NCTC 11711) (Mesomycoplasma mobile)).